Consider the following 525-residue polypeptide: ATP-dependent RNA helicase dbp8 (525 aa).

Positions 1–29 (MAPLSTPESISREISVSSDASADESTSLD) are enriched in polar residues. The tract at residues 1-76 (MAPLSTPESI…TNATSSRKDD (76 aa)) is disordered. The Q motif signature appears at 95–123 (NSFKALNVAPWLVGSLTTMAVRKPTAIQR). Residues 126 to 305 (IPEILKGRDC…SMPQTPGKPP (180 aa)) form the Helicase ATP-binding domain. 139-146 (SRTGSGKT) contacts ATP. Positions 248–251 (DEAD) match the DEAD box motif. The Helicase C-terminal domain maps to 337-484 (AFLHVLLSTE…EYEEEGVNLE (148 aa)).

This sequence belongs to the DEAD box helicase family. DDX49/DBP8 subfamily.

The protein localises to the nucleus. It localises to the nucleolus. It carries out the reaction ATP + H2O = ADP + phosphate + H(+). Functionally, ATP-binding RNA helicase involved in 40S ribosomal subunit biogenesis and is required for the normal formation of 18S rRNAs through pre-rRNA processing at A0, A1 and A2 sites. Required for vegetative growth. The chain is ATP-dependent RNA helicase dbp8 (dbp8) from Emericella nidulans (strain FGSC A4 / ATCC 38163 / CBS 112.46 / NRRL 194 / M139) (Aspergillus nidulans).